Here is a 157-residue protein sequence, read N- to C-terminus: Protein Smg homolog (157 aa).

The protein belongs to the Smg family.

The sequence is that of Protein Smg homolog from Idiomarina loihiensis (strain ATCC BAA-735 / DSM 15497 / L2-TR).